Reading from the N-terminus, the 518-residue chain is UPF0053 inner membrane protein YoaE (518 aa).

Residues 1 to 13 are Cytoplasmic-facing; that stretch reads MEFLMDPSIWAGL. A helical transmembrane segment spans residues 14-34; it reads LTLVVLEIVLGIDNLVFIAIL. Residues 35–48 lie on the Periplasmic side of the membrane; that stretch reads ADKLPPKQRDKARL. The helical transmembrane segment at 49–69 threads the bilayer; it reads LGLSLALIMRLGLLSLISWMV. The Cytoplasmic portion of the chain corresponds to 70-78; the sequence is TLTKPLFTV. A helical membrane pass occupies residues 79–99; the sequence is MDFSFSGRDLIMLFGGIFLLF. Topologically, residues 100–124 are periplasmic; it reads KATTELHERLENRDHDSGHGKGYAS. The helical transmembrane segment at 125–145 threads the bilayer; it reads FWVVVTQIVILDAVFSLDAVI. At 146–149 the chain is on the cytoplasmic side; sequence TAVG. Residues 150 to 170 traverse the membrane as a helical segment; that stretch reads MVNHLPVMMAAVVIAMAVMLL. Residues 171-184 lie on the Periplasmic side of the membrane; sequence ASKPLTRFVNQHPT. The helical transmembrane segment at 185 to 205 threads the bilayer; that stretch reads VVVLCLSFLLMIGLSLVAEGF. Gly206 is a topological domain (cytoplasmic). A helical membrane pass occupies residues 207-227; it reads FHIPKGYLYAAIGFSIIIEVF. Residues 228 to 354 are Periplasmic-facing; that stretch reads NQIARRNFIR…IGIVRAKELL (127 aa). 2 CBS domains span residues 304-363 and 367-427; these read MTPR…GVDV and ASAS…DADE. Residues 355 to 375 form a helical membrane-spanning segment; the sequence is VALEEGVDVAAIASASPAIIV. At 376 to 518 the chain is on the cytoplasmic side; that stretch reads PETLDPINLL…KEQPAHDEDE (143 aa).

It belongs to the UPF0053 family.

Its subcellular location is the cell inner membrane. This Escherichia coli O157:H7 protein is UPF0053 inner membrane protein YoaE (yoaE).